A 334-amino-acid polypeptide reads, in one-letter code: Flavonol synthase/flavanone 3-hydroxylase (334 aa).

The 100-residue stretch at 196–295 (DLVYLMKINY…RMSWPVFLEP (100 aa)) folds into the Fe2OG dioxygenase domain. Fe cation contacts are provided by His-220, Asp-222, and His-276.

This sequence belongs to the iron/ascorbate-dependent oxidoreductase family. The cofactor is Fe cation. It depends on L-ascorbate as a cofactor.

The protein resides in the cytoplasm. It carries out the reaction a (2R,3R)-dihydroflavonol + 2-oxoglutarate + O2 = a flavonol + succinate + CO2 + H2O. The catalysed reaction is a (2S)-flavan-4-one + 2-oxoglutarate + O2 = a (2R,3R)-dihydroflavonol + succinate + CO2. Its pathway is secondary metabolite biosynthesis; flavonoid biosynthesis. In terms of biological role, catalyzes the formation of flavonols from dihydroflavonols. It can act on dihydrokaempferol to produce kaempferol, on dihydroquercetin to produce quercitin and on dihydromyricetin to produce myricetin. This Eustoma exaltatum subsp. russellianum (Bluebells) protein is Flavonol synthase/flavanone 3-hydroxylase (FLS).